The primary structure comprises 379 residues: Chaperone protein DnaJ (379 aa).

The J domain maps to 5 to 70 (DYYEVLGVAK…QKRAAYDQYG (66 aa)). Residues 139–217 (GYDTQIRVPS…CHGAGKVKET (79 aa)) form a CR-type zinc finger. Zn(2+) is bound by residues C152, C155, C169, C172, C191, C194, C205, and C208. CXXCXGXG motif repeat units follow at residues 152–159 (CEICHGSG), 169–176 (CPTCSGSG), 191–198 (CPKCHGTG), and 205–212 (CGHCHGAG).

This sequence belongs to the DnaJ family. As to quaternary structure, homodimer. Zn(2+) is required as a cofactor.

It is found in the cytoplasm. Its function is as follows. Participates actively in the response to hyperosmotic and heat shock by preventing the aggregation of stress-denatured proteins and by disaggregating proteins, also in an autonomous, DnaK-independent fashion. Unfolded proteins bind initially to DnaJ; upon interaction with the DnaJ-bound protein, DnaK hydrolyzes its bound ATP, resulting in the formation of a stable complex. GrpE releases ADP from DnaK; ATP binding to DnaK triggers the release of the substrate protein, thus completing the reaction cycle. Several rounds of ATP-dependent interactions between DnaJ, DnaK and GrpE are required for fully efficient folding. Also involved, together with DnaK and GrpE, in the DNA replication of plasmids through activation of initiation proteins. The polypeptide is Chaperone protein DnaJ (Paraburkholderia phytofirmans (strain DSM 17436 / LMG 22146 / PsJN) (Burkholderia phytofirmans)).